The sequence spans 172 residues: Type VI secretion system sheath protein TssB1 (172 aa).

Forms a heterodimer with TssC1. Heterodimers assemble to form the sheath of the T6SS machinery. Interacts with TagJ. Interacts with TssA1.

Core component of the H1 type VI (H1-T6SS) secretion system that plays a role in the release of toxins targeting both eukaryotic and prokaryotic species. Forms the sheath of the structure by assembling into tubules together with TssC1 resulting in the stacking of cogwheel-like structures showing predominantly a 12-fold symmetry. The sheath contracts to provide the energy needed for effector delivery. The polypeptide is Type VI secretion system sheath protein TssB1 (Pseudomonas aeruginosa (strain ATCC 15692 / DSM 22644 / CIP 104116 / JCM 14847 / LMG 12228 / 1C / PRS 101 / PAO1)).